Consider the following 138-residue polypeptide: Transcription antitermination protein NusB (138 aa).

It belongs to the NusB family.

In terms of biological role, involved in transcription antitermination. Required for transcription of ribosomal RNA (rRNA) genes. Binds specifically to the boxA antiterminator sequence of the ribosomal RNA (rrn) operons. The sequence is that of Transcription antitermination protein NusB from Yersinia enterocolitica serotype O:8 / biotype 1B (strain NCTC 13174 / 8081).